The chain runs to 532 residues: MWDSPIIFTRMRELVQSVSPAALSWAVVAVYIGTFFWLKSRSSKQRLPLPPGPRGLPLIGNSFQTPAVNPWEKYKEWSDEYGPVMTLSLGLTTTIILSSHQVANDLMEKKSTIYSSRPQLVMFNRLSGGMNSSGMEYGKRWRDHRSLQASVLRPWMTQRYTALRDVETKQLLAELLKTDDFSSCFKRMVASLFMTLAYGKRVQYPDDPEIRGMEELVRVKSEAGEASFRATGQLVEYIPLLQYLPSFLTPWKEMCDRICEQFNKTFVDRLREGINAPAWTWAKEVSKHKVARPMSELEVSYTLGTLYEASLTSQQILRIIVLVAALYPEKAAKAQEELDKVVGADRLPAAADVRNLPYIDAFVKEALRWRPFAPLGAPRESIRDVEYNGYLIPKGATILVNQWALDYNEDVFPEPFSFLPERWIANPDLPFSTFGFGQRGCPGRYFAQDSLFISTARLLWAFNIRTASPVEVEDMLRNPSAGAFLSPIPEFDATFAARDAQRKALIEKEWEIAPKESYAILREVEKELTSEA.

The chain crosses the membrane as a helical span at residues 18–38; that stretch reads VSPAALSWAVVAVYIGTFFWL. Residue Cys-441 participates in heme binding.

The protein belongs to the cytochrome P450 family. It depends on heme as a cofactor.

It is found in the membrane. It carries out the reaction preechinulin + reduced [NADPH--hemoprotein reductase] + O2 = neoechinulin A + oxidized [NADPH--hemoprotein reductase] + 2 H2O + H(+). Its pathway is secondary metabolite biosynthesis. It participates in alkaloid biosynthesis. Its function is as follows. Cytochrome P450 monooxygenase; part of the gene cluster that mediates the biosynthesis of echinulin family alkaloid. The pathway begins with the biosynthesis of the cyclic dipeptide cyclo-L-Trp-L-Ala (cyclo-TA) by the NRPS criC via condensation of L-alanine and L-tryptophan. The prenyltransferase criA then catalyzes the first prenylation step, a reverse prenylation reaction at C2, to yield preechinulin. Preechinulin is the substrate of the cytochrome P450 monooxygenase criE that catalyzes the formation of the double bond between C10 and C11 to produce neoechulin A. The unique prenyltransferase criF functions as a competitive enzyme with criE for preechinulin metabolization and uses preechinulin for effective regiospecific prenylations. Preechinulin is prenylated by criF at C5 or C7. C7-prenylation leads to accumulation of tardioxopiperazine B without further modification by criF. In contrast, the C5-prenylated tardioxopiperazine A can be prenylated again by criF, predominantly at C7 to form echinulin or less frequently at C4 to give variecolorin L. CriF also accepts neoechilunin A to produce varlecolorin G (prenylation at C5) or isoechinulin A (prenylation at C7). CriF further converts isoechinulin A into dehydroechinulin. Moreover, a yet unidentified enzyme can also convert neoechilunin A into neoechilunin B by introducing a double bond between positions C14 and C17 and thus provides a further substrate to criF for C5 and C7 prenylation. This is Cytochrome P450 monooxygenase criE from Aspergillus cristatus (Chinese Fuzhuan brick tea-fermentation fungus).